Consider the following 216-residue polypeptide: Twisted gastrulation protein homolog 1-A (216 aa).

An N-terminal signal peptide occupies residues methionine 1–cysteine 25. Residues asparagine 52, asparagine 81, and asparagine 145 are each glycosylated (N-linked (GlcNAc...) asparagine).

It belongs to the twisted gastrulation protein family. As to quaternary structure, binds directly to bmp2, bmp4 and bmp7 and can form a ternary complex with bmps and chordin, thus preventing the binding of bmps to their cell surface receptors. As to expression, posterior defects are induced by overexpression. This may arise through alteration of bmp4 or chrd function in the developing tailbud region.

It is found in the secreted. In terms of biological role, involved in dorsal-ventral patterning, permitting peak BMP signaling by antagonizing the residual anti-BMP activity of the cleavage products of chrd. Functions to promote the formation of ventral mesoderm by increasing the activity of bmp7 and other BMPS. Seems to antagonize BMP signaling by forming ternary complexes with chrd and BMPs, thereby preventing BMPs from binding to their receptors. In addition to the anti-BMP function, also has pro-BMP activity, partly mediated by cleavage and degradation of chrd, which releases BMPs from ternary complexes. May be an important modulator of BMP-regulated cartilage development and chondrocyte differentiation. This chain is Twisted gastrulation protein homolog 1-A (twsg1-a), found in Xenopus laevis (African clawed frog).